A 205-amino-acid chain; its full sequence is Recombination protein RecR (205 aa).

The C4-type zinc finger occupies 64-79; that stretch reads CSRCYFITQNDLCAIC. One can recognise a Toprim domain in the interval 87–182; the sequence is RIVCVVEEPL…RVTRLARGLP (96 aa).

Belongs to the RecR family.

Functionally, may play a role in DNA repair. It seems to be involved in an RecBC-independent recombinational process of DNA repair. It may act with RecF and RecO. This is Recombination protein RecR from Roseiflexus castenholzii (strain DSM 13941 / HLO8).